The chain runs to 633 residues: Glutamyl-tRNA(Gln) amidotransferase subunit E (633 aa).

Residues L415 to D437 form a disordered region.

It belongs to the GatB/GatE family. GatE subfamily. In terms of assembly, heterodimer of GatD and GatE.

The enzyme catalyses L-glutamyl-tRNA(Gln) + L-glutamine + ATP + H2O = L-glutaminyl-tRNA(Gln) + L-glutamate + ADP + phosphate + H(+). Its function is as follows. Allows the formation of correctly charged Gln-tRNA(Gln) through the transamidation of misacylated Glu-tRNA(Gln) in organisms which lack glutaminyl-tRNA synthetase. The reaction takes place in the presence of glutamine and ATP through an activated gamma-phospho-Glu-tRNA(Gln). The GatDE system is specific for glutamate and does not act on aspartate. This Saccharolobus solfataricus (strain ATCC 35092 / DSM 1617 / JCM 11322 / P2) (Sulfolobus solfataricus) protein is Glutamyl-tRNA(Gln) amidotransferase subunit E.